A 457-amino-acid chain; its full sequence is Protein unc-93 homolog A (457 aa).

5 helical membrane-spanning segments follow: residues 8–28 (VLVL…LQSL), 42–62 (ALST…PVLI), 65–85 (LGCK…SLGN), 86–106 (FYAS…GAAA), and 140–160 (IFFL…SLVF). A glycan (N-linked (GlcNAc...) asparagine) is linked at Asn-190. A run of 6 helical transmembrane segments spans residues 202–222 (TLLG…AVFL), 257–277 (LRLL…LSGD), 291–311 (FVGY…VLFG), 320–340 (TVLF…LLLW), 344–364 (PSQL…DAVW), and 395–415 (FVIA…YVLL). The segment at 438–457 (GPLAAGRTKPAEDGATQTKL) is disordered.

Belongs to the unc-93 family.

The protein localises to the cell membrane. The protein is Protein unc-93 homolog A (UNC93A) of Bos taurus (Bovine).